The primary structure comprises 122 residues: uncharacterized protein (122 aa).

The next 2 helical transmembrane spans lie at 9–29 and 60–80; these read VATV…STWV and LFSF…CLIM.

The protein localises to the cytoplasm. The protein resides in the membrane. This is an uncharacterized protein from Schizosaccharomyces pombe (strain 972 / ATCC 24843) (Fission yeast).